A 195-amino-acid polypeptide reads, in one-letter code: Probable GTP-binding protein EngB (195 aa).

Residues 22 to 195 (GYPEIALVGR…WKWIEDRMGE (174 aa)) form the EngB-type G domain. GTP contacts are provided by residues 30 to 37 (GRSNVGKS), 57 to 61 (GKTQT), 75 to 78 (DVPG), 142 to 145 (TKSD), and 173 to 176 (MFSA). Ser-37 and Thr-59 together coordinate Mg(2+).

Belongs to the TRAFAC class TrmE-Era-EngA-EngB-Septin-like GTPase superfamily. EngB GTPase family. Mg(2+) is required as a cofactor.

Functionally, necessary for normal cell division and for the maintenance of normal septation. The polypeptide is Probable GTP-binding protein EngB (Pediococcus pentosaceus (strain ATCC 25745 / CCUG 21536 / LMG 10740 / 183-1w)).